A 211-amino-acid polypeptide reads, in one-letter code: 3,4-dihydroxy-2-butanone 4-phosphate synthase (211 aa).

D-ribulose 5-phosphate contacts are provided by residues Arg37–Glu38, Asp42, Arg150–Thr154, and Glu174. Glu38 is a Mg(2+) binding site. Residue His153 coordinates Mg(2+).

The protein belongs to the DHBP synthase family. Homodimer. Requires Mg(2+) as cofactor. It depends on Mn(2+) as a cofactor.

The enzyme catalyses D-ribulose 5-phosphate = (2S)-2-hydroxy-3-oxobutyl phosphate + formate + H(+). It functions in the pathway cofactor biosynthesis; riboflavin biosynthesis; 2-hydroxy-3-oxobutyl phosphate from D-ribulose 5-phosphate: step 1/1. Catalyzes the conversion of D-ribulose 5-phosphate to formate and 3,4-dihydroxy-2-butanone 4-phosphate. This Baumannia cicadellinicola subsp. Homalodisca coagulata protein is 3,4-dihydroxy-2-butanone 4-phosphate synthase.